Consider the following 305-residue polypeptide: Tetraspanin-12 (305 aa).

The Cytoplasmic portion of the chain corresponds to methionine 1 to cysteine 12. Residues cysteine 9 and cysteine 12 are each lipidated (S-palmitoyl cysteine). A helical membrane pass occupies residues leucine 13–alanine 33. Residues tryptophan 34–tyrosine 59 are Extracellular-facing. Residues phenylalanine 60–leucine 80 traverse the membrane as a helical segment. Residues glycine 81 to asparagine 89 lie on the Cytoplasmic side of the membrane. A lipid anchor (S-palmitoyl cysteine) is attached at cysteine 83. Residues leucine 90 to cysteine 110 traverse the membrane as a helical segment. At glycine 111–arginine 224 the chain is on the extracellular side. A helical transmembrane segment spans residues phenylalanine 225–leucine 245. Over tryptophan 246–leucine 305 the chain is Cytoplasmic.

The protein belongs to the tetraspanin (TM4SF) family. Component of a complex, at least composed of TSPAN12, FZD4 and norrin (NDP). Interacts (when palmitoylated) with ADAM10. Interacts with MMP14/MT1-MMP. Palmitoylated; required for interaction with ADAM10. The precise position of palmitoylated residues is unclear and occurs either on Cys-9, Cys-12 and/or Cys-83.

It is found in the cell membrane. Its function is as follows. Regulator of cell surface receptor signal transduction. Plays a central role in retinal vascularization by regulating norrin (NDP) signal transduction. Acts in concert with norrin (NDP) to promote FZD4 multimerization and subsequent activation of FZD4, leading to promote accumulation of beta-catenin (CTNNB1) and stimulate LEF/TCF-mediated transcriptional programs. Suprisingly, it only activates the norrin (NDP)-dependent activation of FZD4, while it does not activate the Wnt-dependent activation of FZD4, suggesting the existence of a Wnt-independent signaling that also promote accumulation the beta-catenin (CTNNB1). Acts as a regulator of membrane proteinases such as ADAM10 and MMP14/MT1-MMP. Activates ADAM10-dependent cleavage activity of amyloid precursor protein (APP). Activates MMP14/MT1-MMP-dependent cleavage activity. The protein is Tetraspanin-12 (TSPAN12) of Bos taurus (Bovine).